The chain runs to 184 residues: NADH-quinone oxidoreductase subunit B (184 aa).

The [4Fe-4S] cluster site is built by C63, C64, C128, and C158.

Belongs to the complex I 20 kDa subunit family. NDH-1 is composed of 14 different subunits. Subunits NuoB, C, D, E, F, and G constitute the peripheral sector of the complex. It depends on [4Fe-4S] cluster as a cofactor.

The protein resides in the cell inner membrane. The enzyme catalyses a quinone + NADH + 5 H(+)(in) = a quinol + NAD(+) + 4 H(+)(out). NDH-1 shuttles electrons from NADH, via FMN and iron-sulfur (Fe-S) centers, to quinones in the respiratory chain. Couples the redox reaction to proton translocation (for every two electrons transferred, four hydrogen ions are translocated across the cytoplasmic membrane), and thus conserves the redox energy in a proton gradient. This Xylella fastidiosa (strain 9a5c) protein is NADH-quinone oxidoreductase subunit B.